Here is a 212-residue protein sequence, read N- to C-terminus: UPF0319 protein PBPRA2789 (212 aa).

The signal sequence occupies residues 1 to 21; sequence MKKILLAFTLPLVLASQTAMA.

It belongs to the UPF0319 family.

This chain is UPF0319 protein PBPRA2789, found in Photobacterium profundum (strain SS9).